Consider the following 689-residue polypeptide: Glycine--tRNA ligase beta subunit (689 aa).

Belongs to the class-II aminoacyl-tRNA synthetase family. Tetramer of two alpha and two beta subunits.

It is found in the cytoplasm. It catalyses the reaction tRNA(Gly) + glycine + ATP = glycyl-tRNA(Gly) + AMP + diphosphate. This Lacticaseibacillus casei (strain BL23) (Lactobacillus casei) protein is Glycine--tRNA ligase beta subunit.